Consider the following 325-residue polypeptide: NADH-quinone oxidoreductase subunit H (325 aa).

8 helical membrane passes run 11-31, 81-101, 114-134, 154-174, 186-206, 237-257, 265-285, and 304-324; these read ILIS…CGAF, AIFT…FAIV, IGIL…LFAG, LSYE…AGSF, VWNV…GVAV, FFVG…TLFF, LPPF…FILI, and VCLP…LYNA.

This sequence belongs to the complex I subunit 1 family. As to quaternary structure, NDH-1 is composed of 13 different subunits. Subunits NuoA, H, J, K, L, M, N constitute the membrane sector of the complex.

Its subcellular location is the cell inner membrane. It catalyses the reaction a quinone + NADH + 5 H(+)(in) = a quinol + NAD(+) + 4 H(+)(out). NDH-1 shuttles electrons from NADH, via FMN and iron-sulfur (Fe-S) centers, to quinones in the respiratory chain. The immediate electron acceptor for the enzyme in this species is believed to be ubiquinone. Couples the redox reaction to proton translocation (for every two electrons transferred, four hydrogen ions are translocated across the cytoplasmic membrane), and thus conserves the redox energy in a proton gradient. This subunit may bind ubiquinone. In Yersinia pseudotuberculosis serotype O:1b (strain IP 31758), this protein is NADH-quinone oxidoreductase subunit H.